A 311-amino-acid polypeptide reads, in one-letter code: Bifunctional pinoresinol-lariciresinol reductase (311 aa).

Residues 10 to 16 (GGTGYLG), Arg35, and Lys44 contribute to the NADP(+) site. The active-site Proton acceptor is Lys138. Residue Arg142 coordinates NADP(+). His270 serves as a coordination point for substrate.

The protein belongs to the NmrA-type oxidoreductase family. Isoflavone reductase subfamily. As to quaternary structure, dimer. In terms of tissue distribution, expressed in rhizomes, stems, and leaves.

The catalysed reaction is (-)-secoisolariciresinol + NADP(+) = (+)-lariciresinol + NADPH + H(+). It catalyses the reaction (+)-lariciresinol + NADP(+) = (+)-pinoresinol + NADPH + H(+). It functions in the pathway aromatic compound metabolism; phenylpropanoid biosynthesis. Functionally, reductase involved in lignan biosynthesis. Also involved in the biosynthesis of etoposide, a chemotherapeutic compound of the topoisomerase inhibitor family. Catalyzes the enantioselective sequential conversion of (+)-pinoresinol into (+)-lariciresinol and of (+)-lariciresinol into (-)-secoisolariciresinol. Abstracts the 4R-hydride from the NADPH cofactor during catalysis. This is Bifunctional pinoresinol-lariciresinol reductase from Sinopodophyllum hexandrum (Himalayan may apple).